A 208-amino-acid polypeptide reads, in one-letter code: Large ribosomal subunit protein uL4 (208 aa).

The protein belongs to the universal ribosomal protein uL4 family. Part of the 50S ribosomal subunit.

One of the primary rRNA binding proteins, this protein initially binds near the 5'-end of the 23S rRNA. It is important during the early stages of 50S assembly. It makes multiple contacts with different domains of the 23S rRNA in the assembled 50S subunit and ribosome. Functionally, forms part of the polypeptide exit tunnel. The sequence is that of Large ribosomal subunit protein uL4 from Anaplasma marginale (strain Florida).